Here is a 716-residue protein sequence, read N- to C-terminus: UvrABC system protein C (716 aa).

Residues Ala-14–Ile-94 enclose the GIY-YIG domain. Residues Thr-206–Ser-241 enclose the UVR domain.

This sequence belongs to the UvrC family. As to quaternary structure, interacts with UvrB in an incision complex.

The protein resides in the cytoplasm. The UvrABC repair system catalyzes the recognition and processing of DNA lesions. UvrC both incises the 5' and 3' sides of the lesion. The N-terminal half is responsible for the 3' incision and the C-terminal half is responsible for the 5' incision. This is UvrABC system protein C from Anaeromyxobacter sp. (strain Fw109-5).